A 218-amino-acid polypeptide reads, in one-letter code: Thiamine-phosphate synthase (218 aa).

4-amino-2-methyl-5-(diphosphooxymethyl)pyrimidine contacts are provided by residues 43–47 and asparagine 78; that span reads QFRDK. 2 residues coordinate Mg(2+): aspartate 79 and aspartate 98. A 4-amino-2-methyl-5-(diphosphooxymethyl)pyrimidine-binding site is contributed by serine 117. 143 to 145 provides a ligand contact to 2-[(2R,5Z)-2-carboxy-4-methylthiazol-5(2H)-ylidene]ethyl phosphate; that stretch reads TNS. Lysine 146 lines the 4-amino-2-methyl-5-(diphosphooxymethyl)pyrimidine pocket. 2-[(2R,5Z)-2-carboxy-4-methylthiazol-5(2H)-ylidene]ethyl phosphate-binding positions include glycine 174 and 194 to 195; that span reads IS.

It belongs to the thiamine-phosphate synthase family. It depends on Mg(2+) as a cofactor.

The catalysed reaction is 2-[(2R,5Z)-2-carboxy-4-methylthiazol-5(2H)-ylidene]ethyl phosphate + 4-amino-2-methyl-5-(diphosphooxymethyl)pyrimidine + 2 H(+) = thiamine phosphate + CO2 + diphosphate. It catalyses the reaction 2-(2-carboxy-4-methylthiazol-5-yl)ethyl phosphate + 4-amino-2-methyl-5-(diphosphooxymethyl)pyrimidine + 2 H(+) = thiamine phosphate + CO2 + diphosphate. The enzyme catalyses 4-methyl-5-(2-phosphooxyethyl)-thiazole + 4-amino-2-methyl-5-(diphosphooxymethyl)pyrimidine + H(+) = thiamine phosphate + diphosphate. It functions in the pathway cofactor biosynthesis; thiamine diphosphate biosynthesis; thiamine phosphate from 4-amino-2-methyl-5-diphosphomethylpyrimidine and 4-methyl-5-(2-phosphoethyl)-thiazole: step 1/1. Its function is as follows. Condenses 4-methyl-5-(beta-hydroxyethyl)thiazole monophosphate (THZ-P) and 2-methyl-4-amino-5-hydroxymethyl pyrimidine pyrophosphate (HMP-PP) to form thiamine monophosphate (TMP). This Lactococcus lactis subsp. cremoris (strain SK11) protein is Thiamine-phosphate synthase.